A 448-amino-acid polypeptide reads, in one-letter code: UPF0053 protein sll0260 (448 aa).

A CNNM transmembrane domain is found at 2-203; that stretch reads FSSSVELELF…AQAGMIDEAE (202 aa). Helical transmembrane passes span 11–31, 62–82, 106–126, and 142–162; these read FFIFVLVVLNGIFSGSEIAIV, FLSAVQIGITLIGILTGAVGG, LSISLLVGFITYLSLVVGELV, and VAPAMHLVAQLTAPLVYLLGV. 2 consecutive CBS domains span residues 222–281 and 286–345; these read MTPR…GQKI and IVQP…NDDE.

The protein belongs to the UPF0053 family.

The protein localises to the cell membrane. The polypeptide is UPF0053 protein sll0260 (Synechocystis sp. (strain ATCC 27184 / PCC 6803 / Kazusa)).